A 121-amino-acid chain; its full sequence is Large ribosomal subunit protein uL14 (121 aa).

It belongs to the universal ribosomal protein uL14 family. As to quaternary structure, part of the 50S ribosomal subunit. Forms a cluster with proteins L3 and L19. In the 70S ribosome, L14 and L19 interact and together make contacts with the 16S rRNA in bridges B5 and B8.

Functionally, binds to 23S rRNA. Forms part of two intersubunit bridges in the 70S ribosome. This Prochlorococcus marinus (strain SARG / CCMP1375 / SS120) protein is Large ribosomal subunit protein uL14.